A 257-amino-acid chain; its full sequence is NH(3)-dependent NAD(+) synthetase (257 aa).

G40 to S47 is a binding site for ATP. D46 contacts Mg(2+). Deamido-NAD(+) is bound at residue R121. T141 serves as a coordination point for ATP. E146 provides a ligand contact to Mg(2+). Deamido-NAD(+) contacts are provided by K154 and D161. ATP is bound by residues K170 and S192. H238–K239 is a binding site for deamido-NAD(+).

Belongs to the NAD synthetase family. In terms of assembly, homodimer.

It catalyses the reaction deamido-NAD(+) + NH4(+) + ATP = AMP + diphosphate + NAD(+) + H(+). It participates in cofactor biosynthesis; NAD(+) biosynthesis; NAD(+) from deamido-NAD(+) (ammonia route): step 1/1. Catalyzes the ATP-dependent amidation of deamido-NAD to form NAD. Uses ammonia as a nitrogen source. The chain is NH(3)-dependent NAD(+) synthetase from Mycoplasmopsis pulmonis (strain UAB CTIP) (Mycoplasma pulmonis).